We begin with the raw amino-acid sequence, 157 residues long: Phosphopantetheine adenylyltransferase (157 aa).

S8 is a substrate binding site. ATP-binding positions include 8–9 (SF) and H16. Substrate-binding residues include K40, T72, and R86. ATP-binding positions include 87-89 (GLR), E97, and 122-128 (FSFLSSS).

It belongs to the bacterial CoaD family. In terms of assembly, homohexamer. It depends on Mg(2+) as a cofactor.

Its subcellular location is the cytoplasm. The catalysed reaction is (R)-4'-phosphopantetheine + ATP + H(+) = 3'-dephospho-CoA + diphosphate. It participates in cofactor biosynthesis; coenzyme A biosynthesis; CoA from (R)-pantothenate: step 4/5. Its function is as follows. Reversibly transfers an adenylyl group from ATP to 4'-phosphopantetheine, yielding dephospho-CoA (dPCoA) and pyrophosphate. The polypeptide is Phosphopantetheine adenylyltransferase (Prochlorococcus marinus (strain MIT 9211)).